We begin with the raw amino-acid sequence, 152 residues long: Large ribosomal subunit protein bL9 (152 aa).

The protein belongs to the bacterial ribosomal protein bL9 family.

Functionally, binds to the 23S rRNA. This is Large ribosomal subunit protein bL9 from Parasynechococcus marenigrum (strain WH8102).